The primary structure comprises 67 residues: Histone H2A (67 aa).

Q60 carries the post-translational modification N5-methylglutamine.

The protein belongs to the histone H2A family. As to quaternary structure, the nucleosome is a histone octamer containing two molecules each of H2A, H2B, H3 and H4 assembled in one H3-H4 heterotetramer and two H2A-H2B heterodimers. The octamer wraps approximately 147 bp of DNA.

Its subcellular location is the nucleus. The protein localises to the chromosome. Its function is as follows. Core component of nucleosome. Nucleosomes wrap and compact DNA into chromatin, limiting DNA accessibility to the cellular machineries which require DNA as a template. Histones thereby play a central role in transcription regulation, DNA repair, DNA replication and chromosomal stability. DNA accessibility is regulated via a complex set of post-translational modifications of histones, also called histone code, and nucleosome remodeling. In Olisthodiscus luteus (Marine phytoflagellate), this protein is Histone H2A.